The primary structure comprises 107 residues: N(4)-acetylcytidine amidohydrolase (107 aa).

An ASCH domain is found at 6–102 (TFYRRFQADI…RLYVISFSLV (97 aa)). The Proton acceptor role is filled by lysine 20. Threonine 23 (nucleophile) is an active-site residue. The active-site Proton donor is glutamate 73.

The protein belongs to the N(4)-acetylcytidine amidohydrolase family.

The catalysed reaction is N(4)-acetylcytidine + H2O = cytidine + acetate + H(+). It carries out the reaction N(4)-acetyl-2'-deoxycytidine + H2O = 2'-deoxycytidine + acetate + H(+). The enzyme catalyses N(4)-acetylcytosine + H2O = cytosine + acetate + H(+). In terms of biological role, catalyzes the hydrolysis of N(4)-acetylcytidine (ac4C). The chain is N(4)-acetylcytidine amidohydrolase from Edwardsiella ictaluri (strain 93-146).